An 87-amino-acid chain; its full sequence is RNA-binding protein Hfq (87 aa).

One can recognise a Sm domain in the interval 9-68 (DPFLNALRRERIPVSIYLVNGIKLQGQIESFDQFVILLKNTVSQMVYKHAISTVVPARAV).

The protein belongs to the Hfq family. Homohexamer.

Its function is as follows. RNA chaperone that binds small regulatory RNA (sRNAs) and mRNAs to facilitate mRNA translational regulation in response to envelope stress, environmental stress and changes in metabolite concentrations. Also binds with high specificity to tRNAs. In Aeromonas hydrophila subsp. hydrophila (strain ATCC 7966 / DSM 30187 / BCRC 13018 / CCUG 14551 / JCM 1027 / KCTC 2358 / NCIMB 9240 / NCTC 8049), this protein is RNA-binding protein Hfq.